A 349-amino-acid chain; its full sequence is KH domain-containing, RNA-binding, signal transduction-associated protein 2 (349 aa).

The KH domain occupies 65–135 (LIPVKQYPKF…HLSDELHVLI (71 aa)). 2 disordered regions span residues 182–284 (EDSG…DDQT) and 319–349 (PEEW…YGRY). Arginine 230 and arginine 240 each carry omega-N-methylarginine. Basic and acidic residues predominate over residues 340-349 (GYREHPYGRY).

This sequence belongs to the KHDRBS family. In terms of assembly, self-associates to form homooligomers. Interacts with KHDRBS1/SAM68; heterooligomer formation of KHDRBS family proteins may modulate RNA substrate specificity. Interacts with RBMX. Interacts with SAFB, SFRS9 and YTHDC1. Interacts with FYN and PLCG1 (via SH3 domain). Interacts (phosphorylated) with FYN, GRB2, PLCG1 and RASA1 (via SH2 domain). Post-translationally, methylated. In terms of processing, tyrosine phosphorylated by FYN, PTK6 and SRC. Tyrosine phosphorylated by SRC during mitosis. Highly expressed in brain, lung, kidney and small intestine. Weakly expressed in placenta, liver, spleen, thymus, ovary and colon.

The protein localises to the nucleus. Functionally, RNA-binding protein that plays a role in the regulation of alternative splicing and influences mRNA splice site selection and exon inclusion. Binds both poly(A) and poly(U) homopolymers. Phosphorylation by PTK6 inhibits its RNA-binding ability. Induces an increased concentration-dependent incorporation of exon in CD44 pre-mRNA by direct binding to purine-rich exonic enhancer. Can regulate alternative splicing of NRXN1 in the laminin G-like domain 6 containing the evolutionary conserved neurexin alternative spliced segment 4 (AS4) involved in neurexin selective targeting to postsynaptic partners. Regulates cell-type specific alternative splicing of NRXN1 at AS4 and acts synergystically with SAM68 in exon skipping. In contrast acts antagonistically with SAM68 in NRXN3 exon skipping at AS4. Its phosphorylation by FYN inhibits its ability to regulate splice site selection. May function as an adapter protein for Src kinases during mitosis. The chain is KH domain-containing, RNA-binding, signal transduction-associated protein 2 (KHDRBS2) from Homo sapiens (Human).